A 298-amino-acid polypeptide reads, in one-letter code: Foldase protein PrsA 1 (298 aa).

An N-terminal signal peptide occupies residues 1–23 (MNKTWKKAATVLAFAGIALSATA). Residue Cys-24 is the site of N-palmitoyl cysteine attachment. The S-diacylglycerol cysteine moiety is linked to residue Cys-24. The 94-residue stretch at 141–234 (QPEVTVQHIL…YGYHVIKMIK (94 aa)) folds into the PpiC domain.

It belongs to the PrsA family.

It is found in the cell membrane. The enzyme catalyses [protein]-peptidylproline (omega=180) = [protein]-peptidylproline (omega=0). Functionally, plays a major role in protein secretion by helping the post-translocational extracellular folding of several secreted proteins. This chain is Foldase protein PrsA 1 (prsA1), found in Lactobacillus johnsonii (strain CNCM I-12250 / La1 / NCC 533).